We begin with the raw amino-acid sequence, 475 residues long: Ankyrin repeat, SAM and basic leucine zipper domain-containing protein 1 (475 aa).

A disordered region spans residues 1–25; the sequence is MAAGTLRGLAVAGGGESSDSEDDGW. Phosphoserine is present on residues serine 17, serine 18, and serine 20. 6 ANK repeats span residues 45–74, 78–107, 110–144, 148–177, 181–210, and 214–243; these read EKNE…NVDS, YGWT…NASF, DKLT…DPNT, RLMT…EVNA, NGYT…NKML, and DGRT…PLEG. In terms of domain architecture, SAM spans 272 to 334; it reads PYTAFGDLEI…KILAALKELE (63 aa).

Interacts with DDX4, PIWIL1, RANBP9 and TDRD1. In terms of tissue distribution, expressed exclusively in testis and ovary with higher levels in testis.

The protein resides in the cytoplasm. In terms of biological role, plays a central role during spermatogenesis by repressing transposable elements and preventing their mobilization, which is essential for the germline integrity. Acts via the piRNA metabolic process, which mediates the repression of transposable elements during meiosis by forming complexes composed of piRNAs and Piwi proteins and governs the methylation and subsequent repression of transposons. Its association with pi-bodies suggests a participation in the primary piRNAs metabolic process. Required prior to the pachytene stage to facilitate the production of multiple types of piRNAs, including those associated with repeats involved in regulation of retrotransposons. May act by mediating protein-protein interactions during germ cell maturation. In Mus musculus (Mouse), this protein is Ankyrin repeat, SAM and basic leucine zipper domain-containing protein 1.